The following is a 322-amino-acid chain: tRNA U34 carboxymethyltransferase (322 aa).

Carboxy-S-adenosyl-L-methionine-binding residues include K91, W105, K110, G129, M195, Y199, and R314.

Belongs to the class I-like SAM-binding methyltransferase superfamily. CmoB family. As to quaternary structure, homotetramer.

It catalyses the reaction carboxy-S-adenosyl-L-methionine + 5-hydroxyuridine(34) in tRNA = 5-carboxymethoxyuridine(34) in tRNA + S-adenosyl-L-homocysteine + H(+). In terms of biological role, catalyzes carboxymethyl transfer from carboxy-S-adenosyl-L-methionine (Cx-SAM) to 5-hydroxyuridine (ho5U) to form 5-carboxymethoxyuridine (cmo5U) at position 34 in tRNAs. This is tRNA U34 carboxymethyltransferase from Ectopseudomonas mendocina (strain ymp) (Pseudomonas mendocina).